We begin with the raw amino-acid sequence, 692 residues long: 5-taurinomethyluridine-[tRNA] synthase subunit MTO1, mitochondrial (692 aa).

The transit peptide at 1 to 25 (MFYLRGCGRWVAASFTKQQFPLVRL) directs the protein to the mitochondrion. FAD is bound by residues 43–48 (GGGHAG), V155, S218, and Q407. At K508 the chain carries N6-methyllysine. The tract at residues 669–692 (AAMNESPKTDQCLRNADRLQERQL) is disordered. Positions 683–692 (NADRLQERQL) are enriched in basic and acidic residues.

Belongs to the MnmG family. As to quaternary structure, homodimer; forms a dimer in the presence of potassium. Interacts with GTPBP3; forms the GTPBP3-MTO1 complex composed of homodimers of GTPBP3 and MTO1. FAD serves as cofactor.

It is found in the mitochondrion. The enzyme catalyses 5,10-methylenetetrahydrofolate + uridine(34) in tRNA + taurine + GTP + A + H2O = 5-taurinomethyluridine(34) in tRNA + 7,8-dihydrofolate + GDP + AH2 + phosphate + H(+). Its function is as follows. Component of the GTPBP3-MTO1 complex that catalyzes the 5-taurinomethyluridine (taum(5)U) modification at the 34th wobble position (U34) of mitochondrial tRNAs (mt-tRNAs), which plays a role in mt-tRNA decoding and mitochondrial translation. Taum(5)U formation on mammalian mt-tRNA requires the presence of both GTPBP3-mediated GTPase activity and MTO1 catalytic activity. The polypeptide is 5-taurinomethyluridine-[tRNA] synthase subunit MTO1, mitochondrial (MTO1) (Macaca fascicularis (Crab-eating macaque)).